The chain runs to 299 residues: Cold shock protein 1 (299 aa).

Alanine 2 bears the N-acetylalanine mark. The 65-residue stretch at 12-76 (TGKVNWFNAS…GKTKAVNVTA (65 aa)) folds into the CSD domain. The tract at residues 76-97 (APGGGSLKKENNSRGNGARRGG) is disordered. 7 CCHC-type zinc fingers span residues 100–117 (SGCY…DCGI), 132–149 (EGCY…DCTS), 164–181 (DGCY…DCTQ), 198–215 (DGCY…DCTQ), 230–247 (GTCY…DCAT), 253–270 (RGCY…DCDQ), and 280–297 (NACY…ECSS).

This sequence belongs to the cold shock protein (CSP) family. Mostly expressed in shoot apices and siliques, and, to a lower extent, in roots, cotyledons, stems, shoots, leaves, floral buds and flowers.

It localises to the nucleus. The protein localises to the cytoplasm. Functionally, chaperone that binds to RNA, single- (ssDNA) and double-stranded (dsDNA) DNA, and unwinds nucleic acid duplex. Exhibits a DNA melting activity. May be involved in cold resistance. Prevents seed germination under dehydration or salt stress conditions. The polypeptide is Cold shock protein 1 (CSP1) (Arabidopsis thaliana (Mouse-ear cress)).